Reading from the N-terminus, the 97-residue chain is Citrate lyase acyl carrier protein (97 aa).

Serine 14 bears the O-(phosphoribosyl dephospho-coenzyme A)serine mark.

It belongs to the CitD family. As to quaternary structure, oligomer with a subunit composition of (alpha,beta,gamma)6.

The protein resides in the cytoplasm. Functionally, covalent carrier of the coenzyme of citrate lyase. The chain is Citrate lyase acyl carrier protein from Leuconostoc citreum (strain KM20).